A 68-amino-acid polypeptide reads, in one-letter code: Conotoxin ba14a (68 aa).

Residues M1 to G20 form the signal peptide. Residues L21–R50 constitute a propeptide that is removed on maturation.

Contains 2 disulfide bonds. As to expression, expressed by the venom duct.

The protein resides in the secreted. The chain is Conotoxin ba14a from Conus bayani (Bayan's cone).